We begin with the raw amino-acid sequence, 199 residues long: Superoxide dismutase [Fe] (199 aa).

His27, His74, Asp158, and His162 together coordinate Fe cation.

It belongs to the iron/manganese superoxide dismutase family. As to quaternary structure, homodimer. It depends on Fe cation as a cofactor.

It catalyses the reaction 2 superoxide + 2 H(+) = H2O2 + O2. In terms of biological role, destroys superoxide anion radicals which are normally produced within the cells and which are toxic to biological systems. The polypeptide is Superoxide dismutase [Fe] (SODB) (Babesia bovis).